The chain runs to 298 residues: dTDP-4-dehydrorhamnose reductase (298 aa).

NADH-binding positions include 10 to 12, 35 to 36, and 59 to 61; these read GQV, DL, and AYT. Residues 11 to 12, 35 to 36, 59 to 61, and Y98 contribute to the NADPH site; these read QV, DL, and AYT. 100–101 is a binding site for dTDP-beta-L-rhamnose; that stretch reads TD. Positions 124 and 128 each coordinate NADH. The NADPH site is built by Y124 and K128. Y124 acts as the Proton donor/acceptor in catalysis. W149 is a dTDP-beta-L-rhamnose binding site.

It belongs to the dTDP-4-dehydrorhamnose reductase family. Homodimer. Mg(2+) serves as cofactor.

The enzyme catalyses dTDP-beta-L-rhamnose + NADP(+) = dTDP-4-dehydro-beta-L-rhamnose + NADPH + H(+). The protein operates within carbohydrate biosynthesis; dTDP-L-rhamnose biosynthesis. Its pathway is bacterial outer membrane biogenesis; LPS O-antigen biosynthesis. Functionally, involved in the biosynthesis of the dTDP-L-rhamnose which is an important component of lipopolysaccharide (LPS). Catalyzes the reduction of dTDP-6-deoxy-L-lyxo-4-hexulose to yield dTDP-L-rhamnose. This Burkholderia thailandensis (strain ATCC 700388 / DSM 13276 / CCUG 48851 / CIP 106301 / E264) protein is dTDP-4-dehydrorhamnose reductase.